The following is a 149-amino-acid chain: Hydroalkoxylation enzyme phnH (149 aa).

The N-terminal stretch at 1 to 18 (MKFTYLVSLAAFAVTALG) is a signal peptide. N-linked (GlcNAc...) asparagine glycans are attached at residues N33 and N127.

As to quaternary structure, homotetramer.

It carries out the reaction 2,4,7,9-tetrahydroxy-6-methyl-8-(2-methylbut-3-en-2-yl)-1-oxo-1H-phenalen-3-ol = (2'R)-atrovenetin. Its pathway is secondary metabolite biosynthesis. Functionally, hydroalkoxylation enzyme; part of the gene cluster that mediates the biosynthesis of phenalenones such as herqueinone, compounds that have been reported to treat tumors, bacterial infections and/or mycoses, and rheumatic diseases. The non-reducing polyketide synthase phnA synthesizes the heptaketide backbone and cyclizes it into the angular, hemiketal-containing naphtho-gamma-pyrone prephenalenone. The product template (PT) domain of phnA catalyzes only the C4-C9 aldol condensation, which is unprecedented among known PT domains. The transformation of prephenalenone to phenalenones requires an FAD-dependent monooxygenase phnB, which catalyzes the C2 aromatic hydroxylation of prephenalenone and ring opening of the gamma-pyrone ring simultaneously. Subsequent intramolecular deprotonation of C3 phenolic oxygen accelerates phenalenone ring closure to yield the tricyclic phenalenone core with a C2 hydroxylation. The prenyltransferase phnF further catalyzes reverse C-prenylation of phenalenone by direct electrophilic substitution at C6, or possibly via first a forward O-prenylation of a neighboring phenol in phenalenone, followed by a Claisen rearrangement. The hydroalkoxylation enzyme phnH catalyzes the 5-exo-trig cyclization via acid catalysis after the spontaneous deprotonation of 7-OH, which leads to the formation of the dihydrobenzofuran atrovenetin. Atrovenetin is further converted to deoxyherqueinone by the O-methyltransferase phnC which can methylate C2-OH to stabilize the northern portion of the phenalenone core. Finally, the oxidoreductase phnG converts deoxyherqueinone to herqueinone via C6 hydroxylation. The protein is Hydroalkoxylation enzyme phnH of Penicillium herquei.